The primary structure comprises 704 residues: Elongation factor G (704 aa).

The region spanning 10–290 (TKVRNIGIMA…AVVDYLPSPL (281 aa)) is the tr-type G domain. GTP-binding positions include 19 to 26 (AHIDAGKT), 83 to 87 (DTPGH), and 137 to 140 (NKMD).

Belongs to the TRAFAC class translation factor GTPase superfamily. Classic translation factor GTPase family. EF-G/EF-2 subfamily.

The protein localises to the cytoplasm. In terms of biological role, catalyzes the GTP-dependent ribosomal translocation step during translation elongation. During this step, the ribosome changes from the pre-translocational (PRE) to the post-translocational (POST) state as the newly formed A-site-bound peptidyl-tRNA and P-site-bound deacylated tRNA move to the P and E sites, respectively. Catalyzes the coordinated movement of the two tRNA molecules, the mRNA and conformational changes in the ribosome. The sequence is that of Elongation factor G from Beutenbergia cavernae (strain ATCC BAA-8 / DSM 12333 / CCUG 43141 / JCM 11478 / NBRC 16432 / NCIMB 13614 / HKI 0122).